Reading from the N-terminus, the 394-residue chain is MSKEKFERTKPHVNVGTIGHVDHGKTTLTAAITTVLAKTYGGNARAFDQIDNAPEEKARGITINTSHVEYDTPSRHYAHVDCPGHADYVKNMITGAAQMDGAILVVAATDGPMPQTREHILLGRQVGVPYIIVFMNKCDMVDDEELLELVEMEVRDLLSTYDFPGDDTPVVRGSALKALEGEPEWEAKIIELAGYLDSYIPEPERAIDKPFLLPIEDVFSISGRGTVVTGRVERGIVKVGEEVEIVGLKDTVKSTCTGVEMFRKLLDEGRAGENVGVLLRGIKREDIERGQVLAKPGSIKPHTKFESEVYILSKDEGGRHTPFFKGYRPQFYFRTTDVTGTIELPEGVEMVMPGDNIQMIVNLIAPIAMDDGLRFAIREGGRTVGAGVVAKVIE.

The tr-type G domain occupies 10-204 (KPHVNVGTIG…YLDSYIPEPE (195 aa)). Residues 19–26 (GHVDHGKT) are G1. 19 to 26 (GHVDHGKT) provides a ligand contact to GTP. Residue T26 participates in Mg(2+) binding. Residues 60–64 (GITIN) form a G2 region. Positions 81-84 (DCPG) are G3. Residues 81-85 (DCPGH) and 136-139 (NKCD) contribute to the GTP site. Residues 136–139 (NKCD) form a G4 region. A G5 region spans residues 174 to 176 (SAL).

This sequence belongs to the TRAFAC class translation factor GTPase superfamily. Classic translation factor GTPase family. EF-Tu/EF-1A subfamily. Monomer.

The protein localises to the cytoplasm. It carries out the reaction GTP + H2O = GDP + phosphate + H(+). In terms of biological role, GTP hydrolase that promotes the GTP-dependent binding of aminoacyl-tRNA to the A-site of ribosomes during protein biosynthesis. This is Elongation factor Tu 1 from Yersinia enterocolitica serotype O:8 / biotype 1B (strain NCTC 13174 / 8081).